Consider the following 318-residue polypeptide: Glutathione synthetase (318 aa).

The region spanning 124-310 is the ATP-grasp domain; that stretch reads EKLFTAWFPE…ITGKLMDAIE (187 aa). 150–207 contributes to the ATP binding site; sequence FREQHGDVILKPLDGMGGASIFRVKEGDPNLSVIIETLTNHGQNYCMAQTFVPDISNG. Residues E281 and N283 each coordinate Mg(2+).

Belongs to the prokaryotic GSH synthase family. Mg(2+) serves as cofactor. The cofactor is Mn(2+).

It carries out the reaction gamma-L-glutamyl-L-cysteine + glycine + ATP = glutathione + ADP + phosphate + H(+). It functions in the pathway sulfur metabolism; glutathione biosynthesis; glutathione from L-cysteine and L-glutamate: step 2/2. This chain is Glutathione synthetase, found in Vibrio cholerae serotype O1 (strain ATCC 39315 / El Tor Inaba N16961).